The sequence spans 199 residues: Auxin-responsive protein IAA1 (199 aa).

The short motif at 25-29 is the EAR-like (transcriptional repression) element; sequence LTLRL. Positions 31-74 are disordered; that stretch reads GSLAAAAAPDPDRKRSSPSSSDAADAADNSSPLAAAADAPPAPK. The segment covering 47 to 69 has biased composition (low complexity); the sequence is SPSSSDAADAADNSSPLAAAADA. The PB1 domain maps to 93-187; it reads AKFVKVAVDG…TCQRLRLMKS (95 aa).

The protein belongs to the Aux/IAA family. Homodimers and heterodimers. In terms of tissue distribution, highly expressed in flowers. Expressed at low levels in roots and shoots.

The protein localises to the nucleus. Aux/IAA proteins are short-lived transcriptional factors that function as repressors of early auxin response genes at low auxin concentrations. This is Auxin-responsive protein IAA1 (IAA1) from Oryza sativa subsp. japonica (Rice).